The sequence spans 232 residues: Orotidine 5'-phosphate decarboxylase (232 aa).

Residues Asp13, Lys35, 62-71, Thr122, Arg182, Gln191, Gly211, and Arg212 each bind substrate; that span reads DLKFHDIPNT. The active-site Proton donor is the Lys64.

Belongs to the OMP decarboxylase family. Type 1 subfamily. In terms of assembly, homodimer.

It carries out the reaction orotidine 5'-phosphate + H(+) = UMP + CO2. The protein operates within pyrimidine metabolism; UMP biosynthesis via de novo pathway; UMP from orotate: step 2/2. Catalyzes the decarboxylation of orotidine 5'-monophosphate (OMP) to uridine 5'-monophosphate (UMP). The protein is Orotidine 5'-phosphate decarboxylase of Pseudomonas savastanoi pv. phaseolicola (strain 1448A / Race 6) (Pseudomonas syringae pv. phaseolicola (strain 1448A / Race 6)).